We begin with the raw amino-acid sequence, 372 residues long: Pristinol synthase (372 aa).

Basic and acidic residues predominate over residues 1 to 12 (MAHETTSGRRLP). Residues 1-23 (MAHETTSGRRLPDPTSPSDPTRR) are disordered. Residues aspartate 100 and aspartate 104 each contribute to the Mg(2+) site. A DDXXD motif motif is present at residues 100 to 104 (DDQFD). Position 197 (arginine 197) interacts with substrate. The Mg(2+) site is built by asparagine 243 and serine 247. A substrate-binding site is contributed by lysine 250. Glutamate 251 contributes to the Mg(2+) binding site. 337 to 338 (RY) serves as a coordination point for substrate. Positions 349 to 372 (GRRRPWDGLTTATGTASPRHPRRA) are disordered.

The protein belongs to the terpene synthase family. The cofactor is Mg(2+).

The enzyme catalyses (2E,6E)-farnesyl diphosphate + H2O = (+)-(2S,3R,9R)-pristinol + diphosphate. The protein operates within secondary metabolite biosynthesis; terpenoid biosynthesis. In terms of biological role, catalyzes the conversion of (2E,6E)-farnesyl diphosphate (FPP) to yield a new 5-8 bicyclic (pristinane) sesquiterpenol (+)-(2S,3R,9R)-pristinol via a 1,11-cyclization, which requires the abstraction of the pyrophosphate from FPP to yield the humulyl cation. The only accepted substrate is farnesyl diphosphate (FPP). This Streptomyces pristinaespiralis (strain ATCC 25486 / DSM 40338 / CBS 914.69 / JCM 4507 / KCC S-0507 / NBRC 13074 / NRRL 2958 / 5647) protein is Pristinol synthase.